A 516-amino-acid polypeptide reads, in one-letter code: Cytochrome P450 1A2 (516 aa).

S69 carries O-linked (GlcNAc) serine glycosylation. F226 lines the substrate pocket. C458 is a binding site for heme.

Belongs to the cytochrome P450 family. In terms of assembly, interacts with PGRMC1; the interaction requires PGRMC1 homodimerization. Heme is required as a cofactor. Liver.

It localises to the endoplasmic reticulum membrane. The protein resides in the microsome membrane. It catalyses the reaction an organic molecule + reduced [NADPH--hemoprotein reductase] + O2 = an alcohol + oxidized [NADPH--hemoprotein reductase] + H2O + H(+). The catalysed reaction is 17beta-estradiol + reduced [NADPH--hemoprotein reductase] + O2 = 2-hydroxy-17beta-estradiol + oxidized [NADPH--hemoprotein reductase] + H2O + H(+). The enzyme catalyses 17beta-estradiol + reduced [NADPH--hemoprotein reductase] + O2 = 4-hydroxy-17beta-estradiol + oxidized [NADPH--hemoprotein reductase] + H2O + H(+). It carries out the reaction estrone + reduced [NADPH--hemoprotein reductase] + O2 = 2-hydroxyestrone + oxidized [NADPH--hemoprotein reductase] + H2O + H(+). It catalyses the reaction estrone + reduced [NADPH--hemoprotein reductase] + O2 = 4-hydroxyestrone + oxidized [NADPH--hemoprotein reductase] + H2O + H(+). The catalysed reaction is cholesterol + reduced [NADPH--hemoprotein reductase] + O2 = 25-hydroxycholesterol + oxidized [NADPH--hemoprotein reductase] + H2O + H(+). The enzyme catalyses all-trans-retinol + reduced [NADPH--hemoprotein reductase] + O2 = all-trans-retinal + oxidized [NADPH--hemoprotein reductase] + 2 H2O + H(+). It carries out the reaction all-trans-retinal + reduced [NADPH--hemoprotein reductase] + O2 = all-trans-retinoate + oxidized [NADPH--hemoprotein reductase] + H2O + 2 H(+). It catalyses the reaction (5Z,8Z,11Z,14Z)-eicosatetraenoate + reduced [NADPH--hemoprotein reductase] + O2 = (14R,15S)-epoxy-(5Z,8Z,11Z)-eicosatrienoate + oxidized [NADPH--hemoprotein reductase] + H2O + H(+). The catalysed reaction is (5Z,8Z,11Z,14Z)-eicosatetraenoate + reduced [NADPH--hemoprotein reductase] + O2 = (14S,15R)-epoxy-(5Z,8Z,11Z)-eicosatrienoate + oxidized [NADPH--hemoprotein reductase] + H2O + H(+). The enzyme catalyses (5Z,8Z,11Z,14Z,17Z)-eicosapentaenoate + reduced [NADPH--hemoprotein reductase] + O2 = (17R,18S)-epoxy-(5Z,8Z,11Z,14Z)-eicosatetraenoate + oxidized [NADPH--hemoprotein reductase] + H2O + H(+). It carries out the reaction (4Z,7Z,10Z,13Z,16Z,19Z)-docosahexaenoate + reduced [NADPH--hemoprotein reductase] + O2 = (19R,20S)-epoxy-(4Z,7Z,10Z,13Z,16Z)-docosapentaenoate + oxidized [NADPH--hemoprotein reductase] + H2O + H(+). It catalyses the reaction (5S)-hydroperoxy-(6E,8Z,11Z,14Z)-eicosatetraenoate = 5-oxo-(6E,8Z,11Z,14Z)-eicosatetraenoate + H2O. The catalysed reaction is (12S)-hydroperoxy-(5Z,8Z,10E,14Z)-eicosatetraenoate = 12-oxo-(5Z,8Z,10E,14Z)-eicosatetraenoate + H2O. The enzyme catalyses (15S)-hydroperoxy-(5Z,8Z,11Z,13E)-eicosatetraenoate = 15-oxo-(5Z,8Z,11Z,13E)-eicosatetraenoate + H2O. It carries out the reaction (13S)-hydroperoxy-(9Z,11E)-octadecadienoate = 13-oxo-(9Z,11E)-octadecadienoate + H2O. It catalyses the reaction (5Z,8Z,11Z,14Z)-eicosatetraenoate + reduced [NADPH--hemoprotein reductase] + O2 = 13-hydroxy-(5Z,8Z,11Z,14Z)-eicosatetraenoate + oxidized [NADPH--hemoprotein reductase] + H2O + H(+). The catalysed reaction is (5Z,8Z,11Z,14Z)-eicosatetraenoate + reduced [NADPH--hemoprotein reductase] + O2 = 19-hydroxy-(5Z,8Z,11Z,14Z)-eicosatetraenoate + oxidized [NADPH--hemoprotein reductase] + H2O + H(+). The enzyme catalyses (9Z,12Z)-octadecadienoate + reduced [NADPH--hemoprotein reductase] + O2 = 11-hydroxy-(9Z,12Z)-octadecadienoate + oxidized [NADPH--hemoprotein reductase] + H2O + H(+). It participates in cofactor metabolism; retinol metabolism. The protein operates within steroid metabolism; cholesterol metabolism. It functions in the pathway lipid metabolism; arachidonate metabolism. A cytochrome P450 monooxygenase involved in the metabolism of various endogenous substrates, including fatty acids, steroid hormones and vitamins. Mechanistically, uses molecular oxygen inserting one oxygen atom into a substrate, and reducing the second into a water molecule, with two electrons provided by NADPH via cytochrome P450 reductase (NADPH--hemoprotein reductase). Catalyzes the hydroxylation of carbon-hydrogen bonds. Exhibits high catalytic activity for the formation of hydroxyestrogens from estrone (E1) and 17beta-estradiol (E2), namely 2-hydroxy E1 and E2. Metabolizes cholesterol toward 25-hydroxycholesterol, a physiological regulator of cellular cholesterol homeostasis. May act as a major enzyme for all-trans retinoic acid biosynthesis in the liver. Catalyzes two successive oxidative transformation of all-trans retinol to all-trans retinal and then to the active form all-trans retinoic acid. Primarily catalyzes stereoselective epoxidation of the last double bond of polyunsaturated fatty acids (PUFA), displaying a strong preference for the (R,S) stereoisomer. Catalyzes bisallylic hydroxylation and omega-1 hydroxylation of PUFA. May also participate in eicosanoids metabolism by converting hydroperoxide species into oxo metabolites (lipoxygenase-like reaction, NADPH-independent). Plays a role in the oxidative metabolism of xenobiotics. Catalyzes the N-hydroxylation of heterocyclic amines and the O-deethylation of phenacetin. Metabolizes caffeine via N3-demethylation. This Homo sapiens (Human) protein is Cytochrome P450 1A2.